Here is a 126-residue protein sequence, read N- to C-terminus: Holo-[acyl-carrier-protein] synthase (126 aa).

The Mg(2+) site is built by Asp8 and Glu50.

Belongs to the P-Pant transferase superfamily. AcpS family. It depends on Mg(2+) as a cofactor.

Its subcellular location is the cytoplasm. The enzyme catalyses apo-[ACP] + CoA = holo-[ACP] + adenosine 3',5'-bisphosphate + H(+). In terms of biological role, transfers the 4'-phosphopantetheine moiety from coenzyme A to a Ser of acyl-carrier-protein. This Micrococcus luteus (strain ATCC 4698 / DSM 20030 / JCM 1464 / CCM 169 / CCUG 5858 / IAM 1056 / NBRC 3333 / NCIMB 9278 / NCTC 2665 / VKM Ac-2230) (Micrococcus lysodeikticus) protein is Holo-[acyl-carrier-protein] synthase.